The following is a 352-amino-acid chain: Rhodopsin (352 aa).

At 1-36 (MNGTEGPFFYIPMVNTTGIVRSPYEYPQYYLVNPAA) the chain is on the extracellular side. Residues N2 and N15 are each glycosylated (N-linked (GlcNAc...) asparagine). A helical membrane pass occupies residues 37-61 (YACLGAYMFFLILVGFPVNFLTLYV). Residues 62 to 73 (TLEHKKLRTPLN) lie on the Cytoplasmic side of the membrane. A helical transmembrane segment spans residues 74–96 (YILLNLAVADLFMVFGGFTTTMY). Over 97 to 110 (TSMHGYFVLGRLGC) the chain is Extracellular. C110 and C187 are disulfide-bonded. Residues 111–133 (NIEGFFATLGGEIALWSLVVLAI) traverse the membrane as a helical segment. Residues 134 to 136 (ERW) carry the 'Ionic lock' involved in activated form stabilization motif. Residues 134-152 (ERWVVVCKPISNFRFGENH) lie on the Cytoplasmic side of the membrane. The chain crosses the membrane as a helical span at residues 153-173 (AIMGVAFTWFMASACAVPPLV). Topologically, residues 174–202 (GWSRYIPEGMQCSCGVDYYTRAEGFNNES) are extracellular. N200 is a glycosylation site (N-linked (GlcNAc...) asparagine). Residues 203–224 (FVIYMFIVHFCIPLAVVGFCYG) form a helical membrane-spanning segment. At 225-252 (RLLCAVKEAAAAQQESETTQRAEREVSR) the chain is on the cytoplasmic side. Residues 253–274 (MVVIMVIGFLVCWLPYASVAWY) traverse the membrane as a helical segment. The Extracellular portion of the chain corresponds to 275 to 286 (IFTHQGSEFGPP). Residues 287-308 (FMTVPAFFAKSSSIYNPMIYIC) form a helical membrane-spanning segment. N6-(retinylidene)lysine is present on K296. The Cytoplasmic portion of the chain corresponds to 309 to 352 (MNKQFRHCMITTLCCGKNPFEEEEGASTTKTEASSVSSSSVSPA). Residues C322 and C323 are each lipidated (S-palmitoyl cysteine). Residues 331–352 (EEGASTTKTEASSVSSSSVSPA) form a disordered region. Residues 342-352 (SSVSSSSVSPA) are compositionally biased toward low complexity.

The protein belongs to the G-protein coupled receptor 1 family. Opsin subfamily. Phosphorylated on some or all of the serine and threonine residues present in the C-terminal region. In terms of processing, contains one covalently linked retinal chromophore.

The protein resides in the membrane. The protein localises to the cell projection. Its subcellular location is the cilium. It is found in the photoreceptor outer segment. Its function is as follows. Photoreceptor required for image-forming vision at low light intensity. While most salt water fish species use retinal as chromophore, most freshwater fish use 3-dehydroretinal, or a mixture of retinal and 3-dehydroretinal. Light-induced isomerization of 11-cis to all-trans retinal triggers a conformational change that activates signaling via G-proteins. Subsequent receptor phosphorylation mediates displacement of the bound G-protein alpha subunit by arrestin and terminates signaling. The polypeptide is Rhodopsin (rho) (Zosterisessor ophiocephalus (Grass goby)).